A 504-amino-acid chain; its full sequence is Probable cytochrome P450 305a1 (504 aa).

Cys450 lines the heme pocket.

Belongs to the cytochrome P450 family. It depends on heme as a cofactor.

The protein resides in the endoplasmic reticulum membrane. Its subcellular location is the microsome membrane. Its function is as follows. May be involved in the metabolism of insect hormones and in the breakdown of synthetic insecticides. The chain is Probable cytochrome P450 305a1 (Cyp305a1) from Drosophila melanogaster (Fruit fly).